We begin with the raw amino-acid sequence, 453 residues long: Elongation factor 1-alpha (453 aa).

A tr-type G domain is found at 5–230 (KTHINIVVIG…DAIVEPKRPH (226 aa)). Residues 14–21 (GHVDAGKS) are G1. 14-21 (GHVDAGKS) is a binding site for GTP. Residues 70-74 (GITID) are G2. Positions 91–94 (DAPG) are G3. GTP contacts are provided by residues 91 to 95 (DAPGH) and 153 to 156 (NKMD). Residues 153–156 (NKMD) form a G4 region. The G5 stretch occupies residues 194-196 (SGW).

This sequence belongs to the TRAFAC class translation factor GTPase superfamily. Classic translation factor GTPase family. EF-Tu/EF-1A subfamily. As to quaternary structure, binds to actin.

It is found in the cytoplasm. In terms of biological role, this protein promotes the GTP-dependent binding of aminoacyl-tRNA to the A-site of ribosomes during protein biosynthesis. It is also an abundant actin filament bundling protein. The chain is Elongation factor 1-alpha (eef1a2) from Dictyostelium discoideum (Social amoeba).